A 208-amino-acid chain; its full sequence is Calcyphosin-like protein (208 aa).

EF-hand domains are found at residues 39–74 (AGIK…YAVV), 75–110 (MEKE…PMSR), 111–146 (ARKE…KHHP), and 154–191 (TEEQ…VSAS). The Ca(2+) site is built by aspartate 52, asparagine 54, asparagine 56, threonine 58, glutamate 63, aspartate 88, aspartate 90, serine 92, threonine 94, and glutamate 99.

Its subcellular location is the cytoplasm. This is Calcyphosin-like protein (Capsl) from Mus musculus (Mouse).